The primary structure comprises 335 residues: N-acetylglucosaminyl-phosphatidylinositol de-N-acetylase (335 aa).

The chain crosses the membrane as a helical span at residues 3–23; the sequence is SAFTFLSLAIFPLALFIFWTL. N-linked (GlcNAc...) asparagine glycans are attached at residues Asn128 and Asn153.

The protein belongs to the PIGL family.

It localises to the endoplasmic reticulum membrane. The enzyme catalyses a 6-(N-acetyl-alpha-D-glucosaminyl)-1-(1,2-diacyl-sn-glycero-3-phospho)-1D-myo-inositol + H2O = a 6-(alpha-D-glucosaminyl)-1-(1,2-diacyl-sn-glycero-3-phospho)-1D-myo-inositol + acetate. It functions in the pathway glycolipid biosynthesis; glycosylphosphatidylinositol-anchor biosynthesis. Functionally, involved in the second step of GPI biosynthesis. De-N-acetylation of N-acetylglucosaminyl-phosphatidylinositol. This chain is N-acetylglucosaminyl-phosphatidylinositol de-N-acetylase, found in Arthroderma benhamiae (strain ATCC MYA-4681 / CBS 112371) (Trichophyton mentagrophytes).